Reading from the N-terminus, the 239-residue chain is Ribonuclease PH (239 aa).

Phosphate-binding positions include R86 and 124–126 (GTR).

This sequence belongs to the RNase PH family. As to quaternary structure, homohexameric ring arranged as a trimer of dimers.

It catalyses the reaction tRNA(n+1) + phosphate = tRNA(n) + a ribonucleoside 5'-diphosphate. Its function is as follows. Phosphorolytic 3'-5' exoribonuclease that plays an important role in tRNA 3'-end maturation. Removes nucleotide residues following the 3'-CCA terminus of tRNAs; can also add nucleotides to the ends of RNA molecules by using nucleoside diphosphates as substrates, but this may not be physiologically important. Probably plays a role in initiation of 16S rRNA degradation (leading to ribosome degradation) during starvation. This chain is Ribonuclease PH, found in Sinorhizobium fredii (strain NBRC 101917 / NGR234).